The following is a 361-amino-acid chain: D-amino-acid oxidase (361 aa).

A signal peptide spans 1–22 (MSNTIVVVGAGVIGLTSALLLS). Residues Ala-10, Ile-13, Lys-34, His-35, Ala-45, Ser-46, Gly-50, and Asn-52 each coordinate FAD. Asn-193 and Asn-222 each carry an N-linked (GlcNAc...) asparagine glycan. 3 residues coordinate (R)-lactate: Tyr-242, Tyr-258, and Arg-305. Positions 242, 258, and 305 each coordinate anthranilate. The FAD site is built by Arg-305, Ser-332, Gly-335, Tyr-336, and Gln-337. The Microbody targeting signal motif lies at 359 to 361 (SKL).

It belongs to the DAMOX/DASOX family. FAD is required as a cofactor. The N-terminus is blocked.

It localises to the peroxisome matrix. The enzyme catalyses a D-alpha-amino acid + O2 + H2O = a 2-oxocarboxylate + H2O2 + NH4(+). Catalyzes the oxidative deamination of D-amino acids with broad substrate specificity. Enables the organism to utilize D-amino acids as a source of nutrients. This chain is D-amino-acid oxidase, found in Fusarium vanettenii (Neocosmospora pisi).